A 149-amino-acid polypeptide reads, in one-letter code: Potassium binding protein Kbp (149 aa).

One can recognise a BON domain in the interval 23–91; that stretch reads DKDDQAKKVQ…SVDDQVKTAT (69 aa). Positions 97-146 constitute a LysM domain; that stretch reads QFYTVKSGDTLSAISKQVYGNANLYNKIFEANKPMLKSPDKIYPGQVLRI.

It localises to the cytoplasm. Its function is as follows. Highly specific potassium binding protein that is required for normal growth in the presence of high levels of external K(+). May act as a sensor of cytoplasmic K(+) concentration. In Escherichia coli O6:H1 (strain CFT073 / ATCC 700928 / UPEC), this protein is Potassium binding protein Kbp.